We begin with the raw amino-acid sequence, 168 residues long: Photosystem I assembly protein Ycf3 (168 aa).

TPR repeat units follow at residues 29–62 (AFSYYRAGMSAQSKGRYAEALQNYYEALQVEEDP), 66–99 (SYTLYNIGLIYGNTGKYTQALEFYHQALSLNANL), and 117–150 (AQSLEEDEYIELSKELFDKAAEYWIQALKLAPDN).

It belongs to the Ycf3 family.

Its subcellular location is the plastid. The protein resides in the chloroplast thylakoid membrane. In terms of biological role, essential for the assembly of the photosystem I (PSI) complex. May act as a chaperone-like factor to guide the assembly of the PSI subunits. This chain is Photosystem I assembly protein Ycf3, found in Phaeodactylum tricornutum (strain CCAP 1055/1).